Reading from the N-terminus, the 258-residue chain is 5'-nucleotidase SurE (258 aa).

Residues Asp-18, Asp-19, Ser-49, and Asn-102 each contribute to the a divalent metal cation site.

The protein belongs to the SurE nucleotidase family. The cofactor is a divalent metal cation.

Its subcellular location is the cytoplasm. The catalysed reaction is a ribonucleoside 5'-phosphate + H2O = a ribonucleoside + phosphate. Its function is as follows. Nucleotidase that shows phosphatase activity on nucleoside 5'-monophosphates. The protein is 5'-nucleotidase SurE of Vibrio parahaemolyticus serotype O3:K6 (strain RIMD 2210633).